Reading from the N-terminus, the 912-residue chain is Alpha-actinin-4 (912 aa).

The tract at residues 1 to 267 (MVDYHAANQA…IMTYVSSFYH (267 aa)) is actin-binding. The interval 12–27 (QYGPNSGGGNGAGGGG) is interaction with VCL. The disordered stretch occupies residues 12–31 (QYGPNSGGGNGAGGGGSMGD). Residues 16–29 (NSGGGNGAGGGGSM) show a composition bias toward gly residues. The residue at position 32 (tyrosine 32) is a Phosphotyrosine. The interval 41–62 (RDLLLDPAWEKQQRKTFTAWCN) is interaction with VCL. 2 Calponin-homology (CH) domains span residues 51–155 (KQQR…LRFA) and 164–270 (TSAK…HAFS). The LXXLL motif motif lies at 85–89 (LMLLL). Residues 109–127 (KINNVNKALDFIASKGVKL) are interaction with VCL. Lysine 115 is modified (N6-acetyllysine). The segment at 178-193 (TAPYKNVNVQNFHISW) is polyphosphoinositide (PIP2)-binding. Residue lysine 215 is modified to N6-acetyllysine. Position 250 is a phosphothreonine (threonine 250). Spectrin repeat units lie at residues 294–404 (HLME…WLLN), 414–519 (HLAE…ALEK), 529–640 (QLHL…ALLE), and 650–753 (HLRR…EVEN). 2 positions are modified to N6-acetyllysine: lysine 593 and lysine 626. Serine 697 bears the Phosphoserine mark. The tract at residues 737–912 (WEQLLTTIAR…STALYGESDL (176 aa)) is mediates interaction with MICALL2. 2 EF-hand domains span residues 766–801 (EQMQEFRASFNHFDKDHGGALGPEEFKACLISLGYD) and 807–842 (QGDAEFNRIMSVVDPNHSGLVTFQAFIDFMSRETTD). Aspartate 779 serves as a coordination point for Ca(2+). Position 780 is an N6-acetyllysine (lysine 780). 2 residues coordinate Ca(2+): aspartate 781 and glutamate 790. Lysine 860 bears the N6-acetyllysine mark. Serine 910 carries the post-translational modification Phosphoserine.

The protein belongs to the alpha-actinin family. In terms of assembly, homodimer; antiparallel. Interacts with MAGI1. Interacts with PDLIM2. Identified in a complex with CASK, IQGAP1, MAGI2, NPHS1, SPTAN1 and SPTBN1. Identified in a IGF2BP1-dependent mRNP granule complex containing untranslated mRNAs. Component of the CART complex, at least composed of ACTN4, HGS/HRS, MYO5B and TRIM3. Binds TRIM3 at the N-terminus. Interacts with MICALL2 (preferentially in opened conformation); stimulated by RAB13 activation. Interacts with PPARG and RARA. Binds to VCL; this interaction triggers VCL conformational changes. Interacts with SEPTIN14. Interacts with IGSF8.

The protein resides in the nucleus. It localises to the cytoplasm. It is found in the cell junction. The protein localises to the cytoskeleton. Its subcellular location is the stress fiber. The protein resides in the perinuclear region. Functionally, F-actin cross-linking protein which is thought to anchor actin to a variety of intracellular structures. This is a bundling protein. Probably involved in vesicular trafficking via its association with the CART complex. The CART complex is necessary for efficient transferrin receptor recycling but not for EGFR degradation. Involved in tight junction assembly in epithelial cells probably through interaction with MICALL2. Links MICALL2 to the actin cytoskeleton and recruits it to the tight junctions. May also function as a transcriptional coactivator, stimulating transcription mediated by the nuclear hormone receptors PPARG and RARA. Association with IGSF8 regulates the immune synapse formation and is required for efficient T-cell activation. The sequence is that of Alpha-actinin-4 from Mus musculus (Mouse).